The primary structure comprises 963 residues: MIDAVLAKVFGTKNEREVKAMLPTVAAIGALEPQLRELSDIDLAAKTIEFKERIAQGATLDDLLIEAFAVVREAGRRVLNMRHFDVQLIGGMVLHKGKIAEMKTGEGKTLVATLPCYLNALGGQGVHVVTVNDYLARRDSEWMGRLYKFLGLRVGVIVHDLDDQERKDAYNADITYGTNNEFGFDYLRDNMKFRIDDCVQRVHNFAIVDEVDSILIDEARTPLIISGPSEESTDKYYKINRIIPKLVRGEVIDGKEPGEKYTTGDYTIDEKHKSSALTEEGVLKLEKLLNIGNLYDPQNIEWNHHVQQALRAHVLYQRDREYVIRDGDEGPEVVIVDEFTGRLMPGRRWSDGLHQAVEAKEGVKIQRENQTLATITFQNYFRMYKKLAGMTGTAETEAAEFYKIYKLEVVVIPTNRSMIRKENTDMVYRTEIEKFRNAAKEIKEYNAKGQPVLVGTISVEKSEHLSGILKKLGVKHEVLNAKNHEREAGIVSQAGRKNAVTVSTNMAGRGTDILLGGNAEFMTKDECLKRKVAEKLTEDQVQYVADEHFYYFTHNEQFYRVRRDLWDEIYKENKAYTDKEHDEVVELGGLHIVATERHESRRIDNQLRGRAGRQGDPGSSRFYLSLQDDLLRIFGGERMQNLMLRLGMEEDVPIESKLITKRIQKAQEAVEAQNFEARKHLLEYDDVNNKQRQTVYGLRRQLLEGEDQKQRVMEMVQGIIEQYIDMRCPDAKHPDNWEMGDLRNDILTQFGYKIDLNELASLSREEMTNTIFDRLQAKYQEKEDLVGADVIRQTERIVMLQVIDNQWKDHLLSMDELKQGIGNRAYGQKDPLVEYKKESYELFTAMMDRIEDETVRYLFFLQVNTGSGPVMPYPDEEEDGDEDSVEEEVRPDPTEQQRLAAKSTMEDFTRNVQRKKEREMEQLQFVGGDGSSTPQQVVAGQKVGRNDPCPCGSGKKYKKCHGS.

Residues Gln-87, 105–109 (GEGKT), and Asp-512 contribute to the ATP site. 2 disordered regions span residues 868–909 (GPVM…EDFT) and 924–963 (QFVG…CHGS). Residues 874–886 (PDEEEDGDEDSVE) are compositionally biased toward acidic residues. Residues Cys-949, Cys-951, Cys-960, and His-961 each coordinate Zn(2+).

It belongs to the SecA family. In terms of assembly, monomer and homodimer. Part of the essential Sec protein translocation apparatus which comprises SecA, SecYEG and auxiliary proteins SecDF. Other proteins may also be involved. Requires Zn(2+) as cofactor.

The protein localises to the cell inner membrane. Its subcellular location is the cytoplasm. The enzyme catalyses ATP + H2O + cellular proteinSide 1 = ADP + phosphate + cellular proteinSide 2.. Functionally, part of the Sec protein translocase complex. Interacts with the SecYEG preprotein conducting channel. Has a central role in coupling the hydrolysis of ATP to the transfer of proteins into and across the cell membrane, serving as an ATP-driven molecular motor driving the stepwise translocation of polypeptide chains across the membrane. This chain is Protein translocase subunit SecA, found in Solibacter usitatus (strain Ellin6076).